The following is a 112-amino-acid chain: Divalent-cation tolerance protein CutA (112 aa).

Cu cation is bound by residues cysteine 16, histidine 83, and histidine 84.

The protein belongs to the CutA family. In terms of assembly, homotrimer. Cu cation is required as a cofactor.

It localises to the cytoplasm. Involved in resistance toward heavy metals. In Escherichia coli O81 (strain ED1a), this protein is Divalent-cation tolerance protein CutA.